The chain runs to 245 residues: Ribosomal RNA large subunit methyltransferase E (245 aa).

Residues 1-26 (MTKPPVGSNRSGRKLGQKVKKGKLKA) form a disordered region. Residues 11-26 (SGRKLGQKVKKGKLKA) show a composition bias toward basic residues. The S-adenosyl-L-methionine site is built by Gly81, Trp83, Asp104, Asp120, and Asp144. The active-site Proton acceptor is Lys184.

It belongs to the class I-like SAM-binding methyltransferase superfamily. RNA methyltransferase RlmE family.

The protein localises to the cytoplasm. The catalysed reaction is uridine(2552) in 23S rRNA + S-adenosyl-L-methionine = 2'-O-methyluridine(2552) in 23S rRNA + S-adenosyl-L-homocysteine + H(+). Functionally, specifically methylates the uridine in position 2552 of 23S rRNA at the 2'-O position of the ribose in the fully assembled 50S ribosomal subunit. The protein is Ribosomal RNA large subunit methyltransferase E of Sinorhizobium medicae (strain WSM419) (Ensifer medicae).